The chain runs to 381 residues: Gustatory and pheromone receptor 39a, isoform C (381 aa).

Topologically, residues 1–37 are cytoplasmic; that stretch reads MDFQPGELCAYYRLCRYLGIFCIDYNPTKKKFRLRRS. Residues 38–58 form a helical membrane-spanning segment; that stretch reads VLCYIVHFALQAYLVGCISVM. Topologically, residues 59–79 are extracellular; the sequence is VTYWRRCFKSELTTTGNHFDR. Residues 80-100 form a helical membrane-spanning segment; that stretch reads LVMVIALGILVVQNAWLIWLQ. Topologically, residues 101–129 are cytoplasmic; it reads APHLRIVRQIEFYRRNHLANVRLLLPKRL. A helical transmembrane segment spans residues 130–150; the sequence is LWLIIATNVVYMANFIKTCIF. Residues 151–171 are Extracellular-facing; that stretch reads EWLTDASRLFVITSLGFPLRY. Residues 172–192 form a helical membrane-spanning segment; it reads LVTSFTMGTYFCMVHIVRLVL. Over 193 to 239 the chain is Cytoplasmic; that stretch reads DWNQSQINAIIDESADLKMTSPNRLRLRVCLEMHDRLMLLCNDEISL. The chain crosses the membrane as a helical span at residues 240–260; it reads VYGFIAWLSWMFASLDVTGVI. Over 261 to 271 the chain is Extracellular; the sequence is YLTMVIQTKKS. A helical membrane pass occupies residues 272–292; that stretch reads IVLKLITNVVWLSPTFMTCAA. The Cytoplasmic segment spans residues 293 to 350; sequence SFMSNRVTIQANKTAKMLTKVPRTGTGLDRMIEKFLLKNLRQKPILTAYGFFALDKST. Residues 351–371 form a helical membrane-spanning segment; sequence LFKLFTAIFTYMVILVQFKEM. Topologically, residues 372 to 381 are extracellular; the sequence is ENSTKSINKF. N-linked (GlcNAc...) asparagine glycosylation occurs at N373.

Belongs to the insect chemoreceptor superfamily. Gustatory receptor (GR) family. Gr21a subfamily. Expressed in the adult labellar chemosensory neurons. In larvae, is expressed in neurons of the terminal external chemosensory organ, as well as in the dorsal pharyngeal sense organ.

The protein resides in the cell membrane. In terms of biological role, gustatory receptor which mediates acceptance or avoidance behavior, depending on its substrates. Plays a role in sustaining courtship behavior in males, possibly through the reception of a stimulating arrestant pheromone. The polypeptide is Gustatory and pheromone receptor 39a, isoform C (Gr39a) (Drosophila melanogaster (Fruit fly)).